A 259-amino-acid polypeptide reads, in one-letter code: MTGHYSKTEHQYILLTSESASFDHYSVYRDPQLPQIFSHNFVQLHDTFPLERLLNFLPSVPKLLDANYLHLKASPQHVFPLGLKQSLVKSGFVVEDELLYDMKLSDWKGQMGHPLTAWGTAKSLSDGSSIMKIYDSIYIGEAIAEQKLKRKYPFYEADIIILVVCYSDQAQKVPIGCGELFIDHQEKTAKIEEVAILDQFQRKGYGSILVKEMLSIAKSLGMEAAYLVAASTDGATQFYEKLTFKKYERVHTVFHYFLT.

Residues 110–259 (QMGHPLTAWG…VHTVFHYFLT (150 aa)) enclose the N-acetyltransferase domain.

May be involved in maturation of the outermost layer of the spore. This is an uncharacterized protein from Bacillus subtilis (strain 168).